Here is a 170-residue protein sequence, read N- to C-terminus: Adenine phosphoribosyltransferase (170 aa).

The protein belongs to the purine/pyrimidine phosphoribosyltransferase family. Homodimer.

The protein localises to the cytoplasm. It catalyses the reaction AMP + diphosphate = 5-phospho-alpha-D-ribose 1-diphosphate + adenine. It participates in purine metabolism; AMP biosynthesis via salvage pathway; AMP from adenine: step 1/1. Catalyzes a salvage reaction resulting in the formation of AMP, that is energically less costly than de novo synthesis. This is Adenine phosphoribosyltransferase from Mesoplasma florum (strain ATCC 33453 / NBRC 100688 / NCTC 11704 / L1) (Acholeplasma florum).